The sequence spans 213 residues: MNYSADSGNTVYVGNIDPRITKEQLYELFIQINPVLRIKYPKDKVLQAYQGYAFIEFYNQGDAQYAIKIMNNTVRLYDRLIKVRQVTNSTGTTNLPSNISKDMILPIAKLFIKNLADSIDSDQLVKIFNKFGKLIREPEIFYLSNGKLKCAYVYFEDFEKADLAIKSLNNQLVANNRITVDYAFKENGKGNAKYGDDVDRLLNKEALKHNMLK.

RRM domains follow at residues 9-88 (NTVY…QVTN) and 108-185 (AKLF…YAFK).

Interacts with RDS3.

The protein localises to the nucleus. In terms of biological role, possible SF3b-like factor. The protein is Protein HSH49 (HSH49) of Saccharomyces cerevisiae (strain ATCC 204508 / S288c) (Baker's yeast).